A 300-amino-acid polypeptide reads, in one-letter code: Protoheme IX farnesyltransferase (300 aa).

9 consecutive transmembrane segments (helical) span residues 24–44 (GLAISVVFSSLAGYLLGIHEF), 46–66 (LETIYVLLMLAIGGYCMVGAS), 99–119 (AFTIATILTITGLTILYMINP), 122–142 (AMFGAISIFLYTCVYTPLKTV), 145–165 (LSVFVGAFPGAIPFMLGWVAA), 176–196 (LFLIQFFWQFPHFWAIGWFLF), 220–240 (IVLYTLWLTAASILPSFGYTG), 244–264 (LTPVSAIIVVLLGLWMLVYAI), and 275–295 (AKTLMLVSVAYISLIQVVYIL).

It belongs to the UbiA prenyltransferase family. Protoheme IX farnesyltransferase subfamily.

The protein resides in the cell inner membrane. It carries out the reaction heme b + (2E,6E)-farnesyl diphosphate + H2O = Fe(II)-heme o + diphosphate. It participates in porphyrin-containing compound metabolism; heme O biosynthesis; heme O from protoheme: step 1/1. Its function is as follows. Converts heme B (protoheme IX) to heme O by substitution of the vinyl group on carbon 2 of heme B porphyrin ring with a hydroxyethyl farnesyl side group. The polypeptide is Protoheme IX farnesyltransferase (Flavobacterium psychrophilum (strain ATCC 49511 / DSM 21280 / CIP 103535 / JIP02/86)).